We begin with the raw amino-acid sequence, 512 residues long: DNA damage-binding protein CMR1 (512 aa).

Positions 32 to 96 (SQIKREAGVE…IPNVNDNQLL (65 aa)) are disordered. The segment covering 34–46 (IKREAGVEDEHLD) has biased composition (basic and acidic residues). Basic residues predominate over residues 47-60 (RKRKKKAGSAKKAV). WD repeat units follow at residues 189–230 (LTAE…PEDE), 241–281 (LFTK…SEEI), 289–329 (DDPL…TEIN), 333–373 (LSDK…NKPE), 390–429 (DSRL…PEDL), 442–481 (GRWT…LAHL), and 482–512 (PTAT…FLFT).

The protein belongs to the WD repeat DDB2/WDR76 family.

In terms of biological role, DNA-binding protein that binds to both single- and double-stranded DNA. Binds preferentially to UV-damaged DNA. May be involved in DNA-metabolic processes. This is DNA damage-binding protein CMR1 from Kluyveromyces lactis (strain ATCC 8585 / CBS 2359 / DSM 70799 / NBRC 1267 / NRRL Y-1140 / WM37) (Yeast).